Consider the following 245-residue polypeptide: tRNA1(Val) (adenine(37)-N6)-methyltransferase (245 aa).

This sequence belongs to the methyltransferase superfamily. tRNA (adenine-N(6)-)-methyltransferase family.

It localises to the cytoplasm. The catalysed reaction is adenosine(37) in tRNA1(Val) + S-adenosyl-L-methionine = N(6)-methyladenosine(37) in tRNA1(Val) + S-adenosyl-L-homocysteine + H(+). Specifically methylates the adenine in position 37 of tRNA(1)(Val) (anticodon cmo5UAC). The protein is tRNA1(Val) (adenine(37)-N6)-methyltransferase of Escherichia coli O157:H7.